The primary structure comprises 498 residues: Lysine--tRNA ligase (498 aa).

Mg(2+) is bound by residues Glu401 and Glu408.

This sequence belongs to the class-II aminoacyl-tRNA synthetase family. As to quaternary structure, homodimer. Mg(2+) serves as cofactor.

The protein localises to the cytoplasm. It catalyses the reaction tRNA(Lys) + L-lysine + ATP = L-lysyl-tRNA(Lys) + AMP + diphosphate. The chain is Lysine--tRNA ligase from Dehalococcoides mccartyi (strain ATCC BAA-2100 / JCM 16839 / KCTC 5957 / BAV1).